The chain runs to 405 residues: Methylamine dehydrogenase heavy chain (405 aa).

The signal sequence occupies residues 1–36; sequence MTTFDHPSMIRQPKPTGLAGGLVLAALMLSSSLALA.

Belongs to the aromatic amine dehydrogenase heavy chain family. As to quaternary structure, tetramer of two light and two heavy chains.

It localises to the periplasm. The enzyme catalyses 2 oxidized [amicyanin] + methylamine + H2O = 2 reduced [amicyanin] + formaldehyde + NH4(+) + 2 H(+). Functionally, methylamine dehydrogenase carries out the oxidation of methylamine. Electrons are passed from methylamine dehydrogenase to amicyanin. The sequence is that of Methylamine dehydrogenase heavy chain (mauB) from Methylophilus methylotrophus (Bacterium W3A1).